Consider the following 358-residue polypeptide: Extracellular phospholipase C (358 aa).

Its subcellular location is the secreted. The chain is Extracellular phospholipase C (plcA) from Dickeya chrysanthemi (Pectobacterium chrysanthemi).